The primary structure comprises 247 residues: Lysosomal membrane ascorbate-dependent ferrireductase CYB561A3 (247 aa).

Over 1–3 (MRG) the chain is Cytoplasmic. Residues 4-24 (IVGFYITYLLCLILGIACVVL) traverse the membrane as a helical segment. Residues 13 to 223 (LCLILGIACV…FGLVVLKILS (211 aa)) form the Cytochrome b561 domain. Topologically, residues 25–46 (VVHWNFMYRDGFAWDGSSKNFN) are lumenal. Residues 47–67 (WHPVLMVTGMLVLYGNAAVVY) form a helical membrane-spanning segment. 2 residues coordinate heme b: His-48 and Arg-68. The Cytoplasmic segment spans residues 68 to 82 (RIPLTWGHNKLPWKL). Residues Lys-77 and Lys-81 each contribute to the L-ascorbate site. A helical transmembrane segment spans residues 83 to 103 (LHAGLLLLSFIFSVIGLCAVF). Residues His-84, 113–116 (NLYS), and His-118 each bind heme b. The Lumenal portion of the chain corresponds to 104–120 (NFHNVHHTANLYSLHSW). Residues 121–141 (VGICTAALFTAQWVMGFTSFL) form a helical membrane-spanning segment. Residues 142 to 155 (LPCTPMAVRAFVKP) lie on the Cytoplasmic side of the membrane. An L-ascorbate-binding site is contributed by Arg-150. The helical transmembrane segment at 156–176 (THVWMGAMILVLSIVSCISGI) threads the bilayer. His-157 and Glu-178 together coordinate heme b. Topologically, residues 177 to 201 (NEKLFFVLKETTNGTKPYSALPPEA) are lumenal. An N-linked (GlcNAc...) asparagine glycan is attached at Asn-189. A helical membrane pass occupies residues 202–222 (VAANSLGVIIVAFGLVVLKIL). Over 223 to 247 (SNQMWQRPEPGDDEGVYRPLAYDGS) the chain is Cytoplasmic. Gln-228 is a heme b binding site.

As to quaternary structure, homodimer. Requires heme b as cofactor.

The protein localises to the late endosome membrane. Its subcellular location is the lysosome membrane. It carries out the reaction Fe(3+)(out) + L-ascorbate(in) = monodehydro-L-ascorbate radical(in) + Fe(2+)(out) + H(+). In terms of biological role, transmembrane reductase that uses ascorbate as an electron donor in the cytoplasm and transfers electrons across membranes to reduce iron cations Fe(3+) into Fe(2+) in the lumen of the late endosome and lysosome. Reduced iron can then be extruded from the late endosome and lysosome to the cytoplasm by divalent metal-specific transporters. It is therefore most probably involved in endosomal and lysosomal cellular iron homeostasis. This chain is Lysosomal membrane ascorbate-dependent ferrireductase CYB561A3 (cyb561a3a), found in Danio rerio (Zebrafish).